The chain runs to 382 residues: Glycerate dehydrogenase (382 aa).

Residues 175 to 176 (RI), 271 to 273 (CSR), and Asp297 each bind NAD(+). Arg273 is an active-site residue. Glu302 is an active-site residue. The Proton donor role is filled by His320. An NAD(+)-binding site is contributed by 320-323 (HIAS).

The protein belongs to the D-isomer specific 2-hydroxyacid dehydrogenase family.

Its subcellular location is the peroxisome. The enzyme catalyses (R)-glycerate + NAD(+) = 3-hydroxypyruvate + NADH + H(+). It participates in photosynthesis; photorespiration; 3-phospho-D-glycerate from glycine: step 3/4. The protein is Glycerate dehydrogenase (HPR-A) of Cucumis sativus (Cucumber).